A 439-amino-acid chain; its full sequence is tRNA-2-methylthio-N(6)-dimethylallyladenosine synthase (439 aa).

The 118-residue stretch at 2–119 (KKLYLKTHGC…LPDLLDSVIQ (118 aa)) folds into the MTTase N-terminal domain. Cysteine 11, cysteine 48, cysteine 82, cysteine 156, cysteine 160, and cysteine 163 together coordinate [4Fe-4S] cluster. The region spanning 142 to 374 (RAEGPSAFVS…QNRINVKAAE (233 aa)) is the Radical SAM core domain. Residues 377-439 (QSMVGTQQRI…RPYSLWGEIC (63 aa)) enclose the TRAM domain.

It belongs to the methylthiotransferase family. MiaB subfamily. In terms of assembly, monomer. Requires [4Fe-4S] cluster as cofactor.

Its subcellular location is the cytoplasm. It catalyses the reaction N(6)-dimethylallyladenosine(37) in tRNA + (sulfur carrier)-SH + AH2 + 2 S-adenosyl-L-methionine = 2-methylsulfanyl-N(6)-dimethylallyladenosine(37) in tRNA + (sulfur carrier)-H + 5'-deoxyadenosine + L-methionine + A + S-adenosyl-L-homocysteine + 2 H(+). Functionally, catalyzes the methylthiolation of N6-(dimethylallyl)adenosine (i(6)A), leading to the formation of 2-methylthio-N6-(dimethylallyl)adenosine (ms(2)i(6)A) at position 37 in tRNAs that read codons beginning with uridine. In Coxiella burnetii (strain Dugway 5J108-111), this protein is tRNA-2-methylthio-N(6)-dimethylallyladenosine synthase.